A 289-amino-acid chain; its full sequence is LysM and putative peptidoglycan-binding domain-containing protein 4 (289 aa).

A disordered region spans residues 1 to 23; that stretch reads MRLREGPTHSFQPPSSVHSSLGS. Residues 1-208 lie on the Extracellular side of the membrane; that stretch reads MRLREGPTHS…PASGADWGIR (208 aa). The span at 9–23 shows a compositional bias: polar residues; the sequence is HSFQPPSSVHSSLGS. Residues asparagine 30 and asparagine 59 are each glycosylated (N-linked (GlcNAc...) asparagine). Residues 71–115 enclose the LysM domain; it reads LERAITEDDNLNKLALQYGCKVSDIKRVNNLITDQDIYALKTIKI. N-linked (GlcNAc...) asparagine glycosylation is found at asparagine 134 and asparagine 178. Residues 209–229 form a helical membrane-spanning segment; the sequence is WWNAVFIMLLVGIVLPVFYIV. The Cytoplasmic segment spans residues 230–289; that stretch reads YFKTQGDSEGTFSIEGRTNVSTSLSPHTNTGHSMEQMTQRTSGFSPGLLQDTHKLLNPGG. The disordered stretch occupies residues 252–272; that stretch reads SLSPHTNTGHSMEQMTQRTSG.

The protein resides in the membrane. This is LysM and putative peptidoglycan-binding domain-containing protein 4 (lysmd4) from Xenopus laevis (African clawed frog).